The sequence spans 791 residues: DUF1769 family protein duc1 (791 aa).

Positions 158–189 (ADSQESDTESLPEINDSSDVSLSDLPSTNVTP) are disordered. Positions 174–184 (SSDVSLSDLPS) are enriched in low complexity. Positions 373–379 (RYFTALE) match the FFAT motif. Residue Y374 is modified to Phosphotyrosine. T376 carries the phosphothreonine modification. Disordered regions lie at residues 381 to 505 (QQDQ…SNRR), 542 to 606 (NVAG…VDGK), and 630 to 658 (PKPVRTATSQSKIPKPVKHIPSDSNNLDP). Residues 415–426 (LIKRMSLRSKKS) are compositionally biased toward basic residues. Residues 444-453 (STASAASTSA) are compositionally biased toward low complexity. The span at 455–473 (KTEKEKKMSAPRRSLDKLI) shows a compositional bias: basic and acidic residues. A phosphoserine mark is found at S477 and S493. Residues 477 to 487 (SLHRHHHHHHK) show a composition bias toward basic residues. Residues 555–564 (EQTSITSGVP) show a composition bias toward polar residues. S574 is modified (phosphoserine). Over residues 574–586 (STPEKIVEERSID) the composition is skewed to basic and acidic residues. The segment covering 587-601 (EVSQSNTPSSKQLPQ) has biased composition (polar residues).

The protein belongs to the UPF0590 family. Interacts (via FFAT-motif) with scs2 (via MSP domain); the interaction is direct and serves to restrict the localization of duc1 to areas of cell membrane-endoplasmic reticulum contact sites, and away from the cell division site.

It localises to the cell membrane. Its function is as follows. Promotes the proper distribution of phosphatidylinositol 4,5-bisphosphate (PtdIns(4,5)P2/PIP2) synthesis at the cell membrane. May bind phosphatidylinositol 4,5-bisphosphate (PtdIns(4,5)P2/PIP2) and is required for robust anchoring of the contractile ring to the cell membrane. The chain is DUF1769 family protein duc1 from Schizosaccharomyces pombe (strain 972 / ATCC 24843) (Fission yeast).